The sequence spans 365 residues: Sulfate/thiosulfate import ATP-binding protein CysA (365 aa).

One can recognise an ABC transporter domain in the interval 3-237 (IEIANIKKSF…PATRFVLEFM (235 aa)). Residue 35 to 42 (GPSGSGKT) participates in ATP binding.

The protein belongs to the ABC transporter superfamily. Sulfate/tungstate importer (TC 3.A.1.6) family. The complex is composed of two ATP-binding proteins (CysA), two transmembrane proteins (CysT and CysW) and a solute-binding protein (CysP).

Its subcellular location is the cell inner membrane. The enzyme catalyses sulfate(out) + ATP + H2O = sulfate(in) + ADP + phosphate + H(+). The catalysed reaction is thiosulfate(out) + ATP + H2O = thiosulfate(in) + ADP + phosphate + H(+). Part of the ABC transporter complex CysAWTP involved in sulfate/thiosulfate import. Responsible for energy coupling to the transport system. This Escherichia coli (strain K12) protein is Sulfate/thiosulfate import ATP-binding protein CysA.